Reading from the N-terminus, the 229-residue chain is Endonuclease V (229 aa).

Asp-43 and Asp-111 together coordinate Mg(2+).

The protein belongs to the endonuclease V family. The cofactor is Mg(2+).

It is found in the cytoplasm. The catalysed reaction is Endonucleolytic cleavage at apurinic or apyrimidinic sites to products with a 5'-phosphate.. Functionally, DNA repair enzyme involved in the repair of deaminated bases. Selectively cleaves double-stranded DNA at the second phosphodiester bond 3' to a deoxyinosine leaving behind the intact lesion on the nicked DNA. The chain is Endonuclease V from Rippkaea orientalis (strain PCC 8801 / RF-1) (Cyanothece sp. (strain PCC 8801)).